Consider the following 401-residue polypeptide: Protein-glutamate methylesterase/protein-glutamine glutaminase (401 aa).

One can recognise a Response regulatory domain in the interval 16–134 (RVLVIDDSAV…LAGAEEFRRD (119 aa)). Asp-67 carries the 4-aspartylphosphate modification. The interval 146 to 208 (PIPPVPTQRD…PQGRGTPRNT (63 aa)) is disordered. 2 stretches are compositionally biased toward low complexity: residues 166–176 (AAPGAPVARSI) and 185–199 (SAPA…AQPP). The 196-residue stretch at 205 to 400 (PRNTARPEII…PGIVRRAKGG (196 aa)) folds into the CheB-type methylesterase domain. Catalysis depends on residues Ser-219, His-246, and Asp-342.

The protein belongs to the CheB family. Post-translationally, phosphorylated by CheA. Phosphorylation of the N-terminal regulatory domain activates the methylesterase activity.

It localises to the cytoplasm. The enzyme catalyses [protein]-L-glutamate 5-O-methyl ester + H2O = L-glutamyl-[protein] + methanol + H(+). The catalysed reaction is L-glutaminyl-[protein] + H2O = L-glutamyl-[protein] + NH4(+). Functionally, involved in chemotaxis. Part of a chemotaxis signal transduction system that modulates chemotaxis in response to various stimuli. Catalyzes the demethylation of specific methylglutamate residues introduced into the chemoreceptors (methyl-accepting chemotaxis proteins or MCP) by CheR. Also mediates the irreversible deamidation of specific glutamine residues to glutamic acid. The protein is Protein-glutamate methylesterase/protein-glutamine glutaminase of Maricaulis maris (strain MCS10) (Caulobacter maris).